The primary structure comprises 141 residues: NADPH-dependent 7-cyano-7-deazaguanine reductase (141 aa).

Catalysis depends on cysteine 34, which acts as the Thioimide intermediate. Aspartate 41 (proton donor) is an active-site residue. Substrate-binding positions include 56-58 (VEL) and 75-76 (HE).

Belongs to the GTP cyclohydrolase I family. QueF type 1 subfamily.

It localises to the cytoplasm. The enzyme catalyses 7-aminomethyl-7-carbaguanine + 2 NADP(+) = 7-cyano-7-deazaguanine + 2 NADPH + 3 H(+). It participates in tRNA modification; tRNA-queuosine biosynthesis. Its function is as follows. Catalyzes the NADPH-dependent reduction of 7-cyano-7-deazaguanine (preQ0) to 7-aminomethyl-7-deazaguanine (preQ1). The polypeptide is NADPH-dependent 7-cyano-7-deazaguanine reductase (Acidithiobacillus ferrooxidans (strain ATCC 23270 / DSM 14882 / CIP 104768 / NCIMB 8455) (Ferrobacillus ferrooxidans (strain ATCC 23270))).